We begin with the raw amino-acid sequence, 602 residues long: ATP-dependent lipid A-core flippase (602 aa).

5 consecutive transmembrane segments (helical) span residues 28 to 48, 84 to 104, 158 to 178, 180 to 200, and 268 to 288; these read VGIF…QPML, LLII…NYFL, IKVV…LLWM, WHLT…VSIA, and PMLQ…VLFL. The ABC transmembrane type-1 domain occupies 32–323; it reads LLSIVGFVIF…LSEVSSTIQK (292 aa). An ABC transporter domain is found at 355–591; the sequence is LEVRNLSFTY…NGHYARLHAM (237 aa). An ATP-binding site is contributed by 389-396; the sequence is GRSGSGKS.

The protein belongs to the ABC transporter superfamily. Lipid exporter (TC 3.A.1.106) family. In terms of assembly, homodimer.

It is found in the cell inner membrane. It catalyses the reaction ATP + H2O + lipid A-core oligosaccharideSide 1 = ADP + phosphate + lipid A-core oligosaccharideSide 2.. Functionally, involved in lipopolysaccharide (LPS) biosynthesis. Translocates lipid A-core from the inner to the outer leaflet of the inner membrane. Transmembrane domains (TMD) form a pore in the inner membrane and the ATP-binding domain (NBD) is responsible for energy generation. This Pseudomonas putida (strain ATCC 47054 / DSM 6125 / CFBP 8728 / NCIMB 11950 / KT2440) protein is ATP-dependent lipid A-core flippase.